Reading from the N-terminus, the 223-residue chain is Putative germin-like protein subfamily 1 member 12 (223 aa).

The signal sequence occupies residues 1–24; that stretch reads MNMKNLYLAILYLLAASTLPFAIA. C34 and C51 form a disulfide bridge. The 152-residue stretch at 65–216 folds into the Cupin type-1 domain; that stretch reads SGLDKARTTE…AFQLDPKVII (152 aa). A glycan (N-linked (GlcNAc...) asparagine) is linked at N81. Positions 114, 116, and 121 each coordinate Mn(2+). Residue N145 is glycosylated (N-linked (GlcNAc...) asparagine). H162 contacts Mn(2+).

The protein belongs to the germin family. Oligomer (believed to be a pentamer but probably hexamer).

It localises to the secreted. Its subcellular location is the extracellular space. The protein localises to the apoplast. Its function is as follows. May play a role in plant defense. Probably has no oxalate oxidase activity even if the active site is conserved. In Arabidopsis thaliana (Mouse-ear cress), this protein is Putative germin-like protein subfamily 1 member 12.